Reading from the N-terminus, the 125-residue chain is Phosphoribosyl-AMP cyclohydrolase (125 aa).

Position 74 (D74) interacts with Mg(2+). C75 contacts Zn(2+). 2 residues coordinate Mg(2+): D76 and D78. 2 residues coordinate Zn(2+): C92 and C99.

Belongs to the PRA-CH family. In terms of assembly, homodimer. It depends on Mg(2+) as a cofactor. The cofactor is Zn(2+).

The protein resides in the cytoplasm. The catalysed reaction is 1-(5-phospho-beta-D-ribosyl)-5'-AMP + H2O = 1-(5-phospho-beta-D-ribosyl)-5-[(5-phospho-beta-D-ribosylamino)methylideneamino]imidazole-4-carboxamide. The protein operates within amino-acid biosynthesis; L-histidine biosynthesis; L-histidine from 5-phospho-alpha-D-ribose 1-diphosphate: step 3/9. In terms of biological role, catalyzes the hydrolysis of the adenine ring of phosphoribosyl-AMP. The chain is Phosphoribosyl-AMP cyclohydrolase from Geobacter sulfurreducens (strain ATCC 51573 / DSM 12127 / PCA).